A 187-amino-acid chain; its full sequence is Protein McbG (187 aa).

This sequence belongs to the pentapeptide repeat protein family.

Functionally, together with proteins McbE and McbF this protein causes immunity to the peptide antibiotic microcin B17 (MccB17), which inhibits DNA replication in Enterobacteriaceae by induction of the SOS repair system. McbG alone can provide some protection. In Escherichia coli, this protein is Protein McbG (mcbG).